The primary structure comprises 287 residues: D-alanine--D-alanine ligase (287 aa).

The region spanning 98–283 (KTKQIAQSVG…FDDVVRITVE (186 aa)) is the ATP-grasp domain. 124 to 169 (PVIIKPVDEGSSKGLFLCNNKEEAEEAVKKLAKPIIEDYIIGEELT) is a binding site for ATP. Residues Asp-238, Glu-250, and Asn-252 each coordinate Mg(2+).

The protein belongs to the D-alanine--D-alanine ligase family. The cofactor is Mg(2+). Mn(2+) is required as a cofactor.

The protein resides in the cytoplasm. It catalyses the reaction 2 D-alanine + ATP = D-alanyl-D-alanine + ADP + phosphate + H(+). Its pathway is cell wall biogenesis; peptidoglycan biosynthesis. Functionally, cell wall formation. This is D-alanine--D-alanine ligase from Fusobacterium nucleatum subsp. nucleatum (strain ATCC 25586 / DSM 15643 / BCRC 10681 / CIP 101130 / JCM 8532 / KCTC 2640 / LMG 13131 / VPI 4355).